Consider the following 187-residue polypeptide: Elongation factor P (187 aa).

This sequence belongs to the elongation factor P family.

It localises to the cytoplasm. It functions in the pathway protein biosynthesis; polypeptide chain elongation. In terms of biological role, involved in peptide bond synthesis. Stimulates efficient translation and peptide-bond synthesis on native or reconstituted 70S ribosomes in vitro. Probably functions indirectly by altering the affinity of the ribosome for aminoacyl-tRNA, thus increasing their reactivity as acceptors for peptidyl transferase. The sequence is that of Elongation factor P from Mycolicibacterium gilvum (strain PYR-GCK) (Mycobacterium gilvum (strain PYR-GCK)).